Here is a 93-residue protein sequence, read N- to C-terminus: Small ribosomal subunit protein uS15c (93 aa).

The protein belongs to the universal ribosomal protein uS15 family. Part of the 30S ribosomal subunit.

It localises to the plastid. The protein localises to the chloroplast. In Jasminum nudiflorum (Winter jasmine), this protein is Small ribosomal subunit protein uS15c (rps15).